The sequence spans 239 residues: MKLNISYPANGTQKLIEIDDDRRLRVFMEKRMGQEVPGDSVGPEFAGYVFKITGGNDKQGFPMFQGVLLPHRVRLLLRAGHPCYRPRRDGERKRKSVRGCIVGQDLAVLALAIVKQGEQDIPGLTDVTVPKRLGPKRASKIRRFFNLSKEDDVRQFVIRREVVPKKEGKKPYTKAPKIQRLVTPRTLQHKRHRFALKRRQAEKNREEAAEFAQLMAKRVAEAKQKKEVVKARRASSMKK.

Ser-148, Ser-235, and Ser-236 each carry phosphoserine.

This sequence belongs to the eukaryotic ribosomal protein eS6 family. Component of the small ribosomal subunit (SSU). Mature yeast ribosomes consist of a small (40S) and a large (60S) subunit. The 40S small subunit contains 1 molecule of ribosomal RNA (18S rRNA) and at least 33 different proteins. The large 60S subunit contains 3 rRNA molecules (25S, 5.8S and 5S rRNA) and at least 46 different proteins. Interacts with snoRNA U3. uS11 interacts with MPP10. Component of the ribosomal small subunit (SSU) processome composed of at least 40 protein subunits and snoRNA U3.

The protein localises to the cytoplasm. In terms of biological role, component of the ribosome, a large ribonucleoprotein complex responsible for the synthesis of proteins in the cell. The small ribosomal subunit (SSU) binds messenger RNAs (mRNAs) and translates the encoded message by selecting cognate aminoacyl-transfer RNA (tRNA) molecules. The large subunit (LSU) contains the ribosomal catalytic site termed the peptidyl transferase center (PTC), which catalyzes the formation of peptide bonds, thereby polymerizing the amino acids delivered by tRNAs into a polypeptide chain. The nascent polypeptides leave the ribosome through a tunnel in the LSU and interact with protein factors that function in enzymatic processing, targeting, and the membrane insertion of nascent chains at the exit of the ribosomal tunnel. eS6 is involved in nucleolar processing of pre-18S ribosomal RNA and ribosome assembly. The chain is Small ribosomal subunit protein eS6B (rps602) from Schizosaccharomyces pombe (strain 972 / ATCC 24843) (Fission yeast).